The primary structure comprises 101 residues: MTVRILAVCGNGQGSSMIMKMKVDQFLTQSNIDHTVNSCAVGEYKSELSGADIIIASTHMAGEITVTGNKYVVGVRNMLSPADFGPKLLKVIKEHFPQDVK.

A PTS EIIB type-2 domain is found at 3-96 (VRILAVCGNG…KLLKVIKEHF (94 aa)). Cys-9 (phosphocysteine intermediate) is an active-site residue. Residue Cys-9 is modified to Phosphocysteine.

The protein resides in the cytoplasm. The enzyme catalyses N(pros)-phospho-L-histidyl-[protein] + L-ascorbate(out) = L-ascorbate 6-phosphate(in) + L-histidyl-[protein]. The phosphoenolpyruvate-dependent sugar phosphotransferase system (sugar PTS), a major carbohydrate active transport system, catalyzes the phosphorylation of incoming sugar substrates concomitantly with their translocation across the cell membrane. The enzyme II UlaABC PTS system is involved in ascorbate transport. The chain is Ascorbate-specific PTS system EIIB component (ulaB) from Shigella dysenteriae serotype 1 (strain Sd197).